The primary structure comprises 317 residues: Pantothenate kinase (317 aa).

ATP is bound at residue 101 to 108 (GSVAVGKS).

This sequence belongs to the prokaryotic pantothenate kinase family.

The protein resides in the cytoplasm. It carries out the reaction (R)-pantothenate + ATP = (R)-4'-phosphopantothenate + ADP + H(+). The protein operates within cofactor biosynthesis; coenzyme A biosynthesis; CoA from (R)-pantothenate: step 1/5. This chain is Pantothenate kinase, found in Actinobacillus succinogenes (strain ATCC 55618 / DSM 22257 / CCUG 43843 / 130Z).